The chain runs to 428 residues: CinA-like protein (428 aa).

The protein belongs to the CinA family.

The protein is CinA-like protein of Mycobacterium leprae (strain TN).